Here is a 696-residue protein sequence, read N- to C-terminus: MASSPQVHPYKKHLMQSQHINFDNRGLQFQNSSLKVGQDFSDNKENRENRDNEDFSTADLPKRSANQPLINEHLRAASVPLLSNDIGNSQEEDFVPVPPPQLHLNNSNNTSLSSLGSTPTNSPSPGALRQTNSSTSLTKEQIKKRTRSVDLSHMYLLNGSSDTQLTATNESVADLSHQMISRYLGGKNNTSLVPRLKTIEMYRQNVKKSKDPEVLFQYAQYMLQTALTIESSNALVQDSDKEGNVSQSDLKLQFLKEAQSYLKKLSIKGYSDAQYLLADGYSSGAFGKIENKEAFVLFQAAAKHGHIESAYRASHCLEEGLGTTRDSRKSVNFLKFAASRNHPSAMYKLGLYSFYGRMGLPTDVNTKLNGVKWLSRAAARANELTAAAPYELAKIYHEGFLDVVIPDEKYAMELYIQAASLGHVPSATLLAQIYETGNDTVGQDTSLSVHYYTQAALKGDSVAMLGLCAWYLLGAEPAFEKDENEAFQWALRAANAGLPKAQFTLGYFYEHGKGCDRNMEYAWKWYEKAAGNEDKRAINKLRSRDGGLASIGKKQHKKNKSISTLNLFSTVDSQTSNVGSNSRVSSKSETFFTGNPKRDREPQGLQINMNSNTNRNGIKTGSDTSIRKSSSSAKGMSREVAEQSMAAKQEVSLSNMGSSNMIRKDFPAVKTESKKPTSLKNKKDKQGKKKKDCVIM.

Disordered stretches follow at residues Gly37–Gln67 and Gln90–Arg145. The segment covering Ser41 to Glu53 has biased composition (basic and acidic residues). Residues Leu104–Gly126 are compositionally biased toward low complexity. A compositionally biased stretch (polar residues) spans Arg129–Lys139. Residue Ser148 is modified to Phosphoserine. Sel1-like repeat units follow at residues Ser271–His306, Ile307–His342, Pro343–Asn382, Ala386–His423, Val424–Asp460, Ser461–Leu498, and Pro499–Asp534. Ser561 and Ser563 each carry phosphoserine. Thr564 is modified (phosphothreonine). 3 stretches are compositionally biased toward polar residues: residues Ser576–Thr593, Leu605–Lys634, and Val651–Met661. Residues Ser576–Met696 form a disordered region. Residues Ile662–Lys675 show a composition bias toward basic and acidic residues. Residues Lys680–Met696 are compositionally biased toward basic residues. Residue Cys693 is modified to Cysteine methyl ester. Residue Cys693 is the site of S-farnesyl cysteine attachment. Residues Val694–Met696 constitute a propeptide, removed in mature form.

This sequence belongs to the SKT5 family. As to quaternary structure, may interact with CHS3 and seems to be an adapter (along with BNI4) to link CHS3 to septins. Post-translationally, farnesylation is required for chitin synthase CHS3 activity but is not required for SKT5 membrane association.

Its subcellular location is the cell membrane. Its function is as follows. Activator of the chitin synthase CHS3 which polymerizes chitin, a structural polymer of the fungal cell wall. This chain is Chitin synthase regulator SKT5, found in Saccharomyces cerevisiae (strain ATCC 204508 / S288c) (Baker's yeast).